The chain runs to 393 residues: Cytochrome b (393 aa).

At 1–33 (MTIRNQRFSLLKQPISSTLNQHLVDYPTPSNLS) the chain is on the mitochondrial matrix side. The chain crosses the membrane as a helical span at residues 34–57 (YWWGFGSLAGICLVIQIVTGVFLA). Residues 58–80 (MHYTPHVDLAFNSVEHIMRDVEG) lie on the Mitochondrial intermembrane side of the membrane. Residues 81–108 (GWLLRYMHANGASMFFIVVYLHIFRGLY) traverse the membrane as a helical segment. Positions 88 and 102 each coordinate heme b. Residues 109–116 (YASYSSPR) are Mitochondrial matrix-facing. The helical transmembrane segment at 117–141 (EFVWCLGVVIFLLMIVTAFIGYVLP) threads the bilayer. The Mitochondrial intermembrane segment spans residues 142–178 (WGQMSFWGATVITSLASAIPVVGDTIVTWLWGGFSVD). The chain crosses the membrane as a helical span at residues 179-210 (NATLNRFFSLHYLLPFILVGASLLHLAALHQY). The heme b site is built by histidine 189 and histidine 203. Residue histidine 208 participates in a ubiquinone binding. Residues 211-229 (GSNNPLGVHSEMDKIAFYP) lie on the Mitochondrial matrix side of the membrane. A helical membrane pass occupies residues 230–252 (YFYVKDLVGWVAFAIFFSIWIFY). The Mitochondrial intermembrane portion of the chain corresponds to 253-293 (APNVLGHPDNYIPANPMSTPPHIVPEWYFLPIYAILRSIPD). A helical membrane pass occupies residues 294-314 (KAGGVAAIALVFICLLALPFF). The Mitochondrial matrix portion of the chain corresponds to 315-325 (KSMYVRSSSFR). A helical transmembrane segment spans residues 326–346 (PIYQGMFWLLLADCLLLGWIG). The Mitochondrial intermembrane segment spans residues 347–353 (CQPVEAP). A helical membrane pass occupies residues 354–370 (FVTIGQISSLVFFLFFA). The Mitochondrial matrix portion of the chain corresponds to 371 to 393 (ITPILGRVGRGIPNSYTDETDHT).

This sequence belongs to the cytochrome b family. As to quaternary structure, component of the ubiquinol-cytochrome c oxidoreductase (cytochrome b-c1 complex, complex III, CIII), a multisubunit enzyme composed of 10 subunits. The complex is composed of 3 respiratory subunits cytochrome b (MT-CYB), cytochrome c1 (CYC1-1 or CYC1-2) and Rieske protein (UCR1-1 or UCR1-2), 2 core protein subunits MPPalpha1 (or MPPalpha2) and MPPB, and 5 low-molecular weight protein subunits QCR7-1 (or QCR7-2), UCRQ-1 (or UCRQ-2), QCR9, UCRY and probably QCR6-1 (or QCR6-2). The complex exists as an obligatory dimer and forms supercomplexes (SCs) in the inner mitochondrial membrane with NADH-ubiquinone oxidoreductase (complex I, CI), resulting in different assemblies (supercomplexes SCI(1)III(2) and SCI(2)III(4)). Requires heme b as cofactor.

The protein resides in the mitochondrion inner membrane. In terms of biological role, component of the ubiquinol-cytochrome c oxidoreductase, a multisubunit transmembrane complex that is part of the mitochondrial electron transport chain which drives oxidative phosphorylation. The respiratory chain contains 3 multisubunit complexes succinate dehydrogenase (complex II, CII), ubiquinol-cytochrome c oxidoreductase (cytochrome b-c1 complex, complex III, CIII) and cytochrome c oxidase (complex IV, CIV), that cooperate to transfer electrons derived from NADH and succinate to molecular oxygen, creating an electrochemical gradient over the inner membrane that drives transmembrane transport and the ATP synthase. The cytochrome b-c1 complex catalyzes electron transfer from ubiquinol to cytochrome c, linking this redox reaction to translocation of protons across the mitochondrial inner membrane, with protons being carried across the membrane as hydrogens on the quinol. In the process called Q cycle, 2 protons are consumed from the matrix, 4 protons are released into the intermembrane space and 2 electrons are passed to cytochrome c. Cytochrome b is a catalytic core subunit containing 2 b-type hemes BL and BH topographically segregated in the quinone reduction (Qi) and quinol oxidation (Q0) sites on opposite sides of the membrane. This chain is Cytochrome b (MT-CYB), found in Arabidopsis thaliana (Mouse-ear cress).